A 108-amino-acid polypeptide reads, in one-letter code: MQTKKYHVAKGDTVMVIAGKEKAKTGKVLQVLPKKDAVIVEGLNMVKRHVRARGNEPGGITEKEAALHVSNVQLYCTKCVKPVRTRIKVLENGEKQRTCVKCDSSLEN.

The protein belongs to the universal ribosomal protein uL24 family. In terms of assembly, part of the 50S ribosomal subunit.

In terms of biological role, one of two assembly initiator proteins, it binds directly to the 5'-end of the 23S rRNA, where it nucleates assembly of the 50S subunit. Its function is as follows. One of the proteins that surrounds the polypeptide exit tunnel on the outside of the subunit. This chain is Large ribosomal subunit protein uL24, found in Trichlorobacter lovleyi (strain ATCC BAA-1151 / DSM 17278 / SZ) (Geobacter lovleyi).